Reading from the N-terminus, the 426-residue chain is NADH-quinone oxidoreductase subunit F (426 aa).

65–74 (GRGGAGFPTG) contributes to the NAD(+) binding site. 176–223 (GAGAYICGEETALIESLEGKRGHPRLKPPYPVQKGLWGKPTVVNNVET) is a binding site for FMN. Residues C347, C350, C353, and C393 each coordinate [4Fe-4S] cluster.

The protein belongs to the complex I 51 kDa subunit family. FMN is required as a cofactor. [4Fe-4S] cluster serves as cofactor.

The catalysed reaction is a quinone + NADH + 5 H(+)(in) = a quinol + NAD(+) + 4 H(+)(out). Its function is as follows. NDH-1 shuttles electrons from NADH, via FMN and iron-sulfur (Fe-S) centers, to quinones in the respiratory chain. Couples the redox reaction to proton translocation (for every two electrons transferred, four hydrogen ions are translocated across the cytoplasmic membrane), and thus conserves the redox energy in a proton gradient. This chain is NADH-quinone oxidoreductase subunit F (nuoF), found in Aquifex aeolicus (strain VF5).